The primary structure comprises 411 residues: MVDKSNKVALVLGATGISGWALAKNALSYPSRSTFQRVIGLMHRPRTVEETGLPNDPRLELYSGVDLQGDLNHVVVKLKEKIPRIEEVTHVYYLAYMTLQTCSGDMRQFRDANVAMTYTAVHACDRLCPNMEFFVLQTGTNAYGVACFDYLRQTQLQVPLRESNPRVPRPWSDTLFYYAQADLIKEANKGKAWKWCEVRPDQIVGHTPAQVSVPYVAPMALYLALYRYINGPGARVQFPGTVRNYHHTYTDVRPDTMARAELYLSLVKSDESHGEAFNIADTDTPGPWSAKWPSICRYFGLEASETIDDEWTDIDGWWYANQTAYERMCAEYGLQKQVMSPTAWSLMKMGHTLIDQNRELCLDKIRGLGFTEDHPVGSSYFQVFEDFERMKIIPPKVVLASPRCRDVLHQC.

Residues D105, Q137, Y249, and R253 each coordinate NADP(+). Y249 functions as the Proton donor in the catalytic mechanism. The active-site Proton donor is Y263.

This sequence belongs to the short-chain dehydrogenases/reductases (SDR) family.

Its pathway is secondary metabolite biosynthesis; terpenoid biosynthesis. Functionally, short chain dehydrogenase; part of the gene cluster that mediates the biosynthesis of calidodehydroaustin, a fungal meroterpenoid. The first step of the pathway is the synthesis of 3,5-dimethylorsellinic acid by the polyketide synthase ausA. 3,5-dimethylorsellinic acid is then prenylated by the polyprenyl transferase ausN. Further epoxidation by the FAD-dependent monooxygenase ausM and cyclization by the probable terpene cyclase ausL lead to the formation of protoaustinoid A. Protoaustinoid A is then oxidized to spiro-lactone preaustinoid A3 by the combined action of the FAD-binding monooxygenases ausB and ausC, and the dioxygenase ausE. Acid-catalyzed keto-rearrangement and ring contraction of the tetraketide portion of preaustinoid A3 by ausJ lead to the formation of preaustinoid A4. The aldo-keto reductase ausK, with the help of ausH, is involved in the next step by transforming preaustinoid A4 into isoaustinone which is in turn hydroxylated by the P450 monooxygenase ausI to form austinolide. The cytochrome P450 monooxygenase ausG modifies austinolide to austinol. Austinol is further acetylated to austin by the O-acetyltransferase ausP, which spontaneously changes to dehydroaustin. The cytochrome P450 monooxygenase ausR then converts dehydroaustin is into 7-dehydrodehydroaustin. The hydroxylation catalyzed by ausR permits the O-acetyltransferase ausQ to add an additional acetyl group to the molecule, leading to the formation of acetoxydehydroaustin. The short chain dehydrogenase ausT catalyzes the reduction of the double bond present between carbon atoms 1 and 2 to convert 7-dehydrodehydroaustin into 1,2-dihydro-7-hydroxydehydroaustin. AusQ catalyzes not only an acetylation reaction but also the addition of the PKS ausV diketide product to 1,2-dihydro-7-hydroxydehydroaustin, forming precalidodehydroaustin. Finally, the iron/alpha-ketoglutarate-dependent dioxygenase converts precalidodehydroaustin into calidodehydroaustin. In Aspergillus calidoustus, this protein is Short chain dehydrogenase ausT.